Consider the following 223-residue polypeptide: Ubiquitin-conjugating enzyme E2 S-A (223 aa).

In terms of domain architecture, UBC core spans 11–157 (HIIRLVYKEV…ARLLTEIHGG (147 aa)). The active-site Glycyl thioester intermediate is the C95. The tract at residues 170–223 (QDLASGASASSADPMIPGVLGGAEGPMAKKHAGERDKKLAAKKKLDKKRALRRL) is disordered. A compositionally biased stretch (basic residues) spans 209–223 (AAKKKLDKKRALRRL).

It belongs to the ubiquitin-conjugating enzyme family.

The catalysed reaction is S-ubiquitinyl-[E1 ubiquitin-activating enzyme]-L-cysteine + [E2 ubiquitin-conjugating enzyme]-L-cysteine = [E1 ubiquitin-activating enzyme]-L-cysteine + S-ubiquitinyl-[E2 ubiquitin-conjugating enzyme]-L-cysteine.. The protein operates within protein modification; protein ubiquitination. Its function is as follows. Catalyzes the covalent attachment of ubiquitin to other proteins. Acts as an essential factor of the anaphase promoting complex/cyclosome (APC/C), a cell cycle-regulated ubiquitin ligase that controls progression through mitosis. Acts by specifically elongating 'Lys-11'-linked polyubiquitin chains initiated by the E2 enzyme ube2c/ubch10 on APC/C substrates, enhancing the degradation of APC/C substrates by the proteasome and promoting mitotic exit. This chain is Ubiquitin-conjugating enzyme E2 S-A (ube2s-a), found in Xenopus laevis (African clawed frog).